The chain runs to 341 residues: MSTNIAINGMGRIGRMVLRIALQNKNLNVVAINASYPPETIAHLINYDTTHGKYNLKVEPIENGLQVGDHKIKLVADRNPENLPWKELDIDIAIDATGKFNHGDKAIAHIKAGAKKVLLTGPSKGGHVQMVVKGVNDDQLDIEAFDIFSNASCTTNCIGPVAKVLNNQFGIVNGLMTTVHAITNDQKNIDNPHKDLRRARSCNESIIPTSTGAAKALKEVLPELEGKLHGMALRVPTKNVSLVDLVVDLEKEVTAEEVNQAFENAGLEGIIEVEHQPLVSVDFNTNPHSAIIDAKSTMVMSGNKVKVIAWYDNEWGYSNRVVDVAEQIGALLTSKETVSAS.

NAD(+)-binding positions include arginine 12–isoleucine 13, arginine 78, and threonine 120. D-glyceraldehyde 3-phosphate contacts are provided by residues serine 152–threonine 154 and threonine 183. Residue cysteine 153 is the Nucleophile of the active site. Asparagine 184 contacts NAD(+). Residues arginine 198, threonine 211–glycine 212, and arginine 234 each bind D-glyceraldehyde 3-phosphate. An NAD(+)-binding site is contributed by asparagine 313.

Belongs to the glyceraldehyde-3-phosphate dehydrogenase family. As to quaternary structure, homotetramer.

It is found in the cytoplasm. The catalysed reaction is D-glyceraldehyde 3-phosphate + phosphate + NAD(+) = (2R)-3-phospho-glyceroyl phosphate + NADH + H(+). It functions in the pathway carbohydrate degradation; glycolysis; pyruvate from D-glyceraldehyde 3-phosphate: step 1/5. Functionally, catalyzes the oxidative phosphorylation of glyceraldehyde 3-phosphate (G3P) to 1,3-bisphosphoglycerate (BPG) using the cofactor NAD. The first reaction step involves the formation of a hemiacetal intermediate between G3P and a cysteine residue, and this hemiacetal intermediate is then oxidized to a thioester, with concomitant reduction of NAD to NADH. The reduced NADH is then exchanged with the second NAD, and the thioester is attacked by a nucleophilic inorganic phosphate to produce BPG. This Staphylococcus aureus (strain MRSA252) protein is Glyceraldehyde-3-phosphate dehydrogenase 2 (gapA2).